Consider the following 301-residue polypeptide: Troponin T, cardiac muscle (301 aa).

Residues 1–72 (MSDAEEVVEE…EAKDAEEGPV (72 aa)) show a composition bias toward acidic residues. Disordered stretches follow at residues 1–97 (MSDA…DGER) and 125–224 (NRKK…KKKI). Ser-2 carries the post-translational modification N-acetylserine. Ser-2 carries the phosphoserine; by CK2 modification. 2 stretches are compositionally biased toward basic and acidic residues: residues 125–186 (NRKK…DEAR) and 206–224 (QTER…KKKI). At Thr-207 the chain carries Phosphothreonine; by PKC/PRKCA. Ser-211 carries the phosphoserine; by PKC/PRKCA modification. Thr-216 carries the phosphothreonine; by PKC/PRKCA and RAF1 modification. Thr-297 is modified (phosphothreonine; by PKC/PRKCA).

This sequence belongs to the troponin T family. In terms of processing, phosphorylation at Thr-216 by PRKCA induces significant reduction in myofilament calcium sensitivity and actomyosin ATPase activity.

Functionally, troponin T is the tropomyosin-binding subunit of troponin, the thin filament regulatory complex which confers calcium-sensitivity to striated muscle actomyosin ATPase activity. This Mus musculus (Mouse) protein is Troponin T, cardiac muscle (Tnnt2).